Reading from the N-terminus, the 298-residue chain is HTH-type transcriptional regulator YhaJ (298 aa).

The 58-residue stretch at 7-64 (LTLEALRVMDAIDRRGSFAAAADELGRVPSALSYTMQKLEEELDVVLFDRSGHRTKFT) folds into the HTH lysR-type domain. Residues 24 to 43 (FAAAADELGRVPSALSYTMQ) constitute a DNA-binding region (H-T-H motif).

The protein belongs to the LysR transcriptional regulatory family.

Positive regulator partially required for expression of genes in the locus of effacement (LEE) large pathogenicity island (PAI). Also partially responsible for expression of neighboring gene dlsT (yhaO) during late exponential growth. Binds to DNA of promoter 1 in LEE and DNA from the dlsT promoter region. The chain is HTH-type transcriptional regulator YhaJ (yhaJ) from Escherichia coli O157:H7.